We begin with the raw amino-acid sequence, 315 residues long: Acetyl-coenzyme A carboxylase carboxyl transferase subunit alpha (315 aa).

One can recognise a CoA carboxyltransferase C-terminal domain in the interval 40–293 (LQDKSKTLTE…REELSSQLAM (254 aa)).

It belongs to the AccA family. As to quaternary structure, acetyl-CoA carboxylase is a heterohexamer composed of biotin carboxyl carrier protein (AccB), biotin carboxylase (AccC) and two subunits each of ACCase subunit alpha (AccA) and ACCase subunit beta (AccD).

The protein localises to the cytoplasm. The catalysed reaction is N(6)-carboxybiotinyl-L-lysyl-[protein] + acetyl-CoA = N(6)-biotinyl-L-lysyl-[protein] + malonyl-CoA. It functions in the pathway lipid metabolism; malonyl-CoA biosynthesis; malonyl-CoA from acetyl-CoA: step 1/1. Functionally, component of the acetyl coenzyme A carboxylase (ACC) complex. First, biotin carboxylase catalyzes the carboxylation of biotin on its carrier protein (BCCP) and then the CO(2) group is transferred by the carboxyltransferase to acetyl-CoA to form malonyl-CoA. The polypeptide is Acetyl-coenzyme A carboxylase carboxyl transferase subunit alpha (Pseudomonas syringae pv. syringae (strain B728a)).